The sequence spans 300 residues: Zinc finger protein 705B (300 aa).

A KRAB domain is found at V7–P78. C2H2-type zinc fingers lie at residues Y172 to H194, Y200 to H222, and Y228 to H250. Residues Y256 to H278 form a C2H2-type 4; degenerate zinc finger.

The protein belongs to the krueppel C2H2-type zinc-finger protein family.

It is found in the nucleus. May be involved in transcriptional regulation. This chain is Zinc finger protein 705B (ZNF705B), found in Homo sapiens (Human).